We begin with the raw amino-acid sequence, 279 residues long: Proteasome subunit beta 2 (279 aa).

Positions 1–53 (MAAAFDPSGRFPDLFTSVGTSSFSAFLSKAAPELLPGRRPLPPGMATGLTPHA) are cleaved as a propeptide — removed in mature form; by autocatalysis. The active-site Nucleophile is the Thr54.

This sequence belongs to the peptidase T1B family. As to quaternary structure, the 20S proteasome core is composed of 14 alpha and 14 beta subunits that assemble into four stacked heptameric rings, resulting in a barrel-shaped structure. The two inner rings, each composed of seven catalytic beta subunits, are sandwiched by two outer rings, each composed of seven alpha subunits. The catalytic chamber with the active sites is on the inside of the barrel. Has a gated structure, the ends of the cylinder being occluded by the N-termini of the alpha-subunits. Is capped by the proteasome-associated ATPase, ARC.

The protein resides in the cytoplasm. The catalysed reaction is Cleavage of peptide bonds with very broad specificity.. It functions in the pathway protein degradation; proteasomal Pup-dependent pathway. The formation of the proteasomal ATPase ARC-20S proteasome complex, likely via the docking of the C-termini of ARC into the intersubunit pockets in the alpha-rings, may trigger opening of the gate for substrate entry. Interconversion between the open-gate and close-gate conformations leads to a dynamic regulation of the 20S proteasome proteolysis activity. Functionally, component of the proteasome core, a large protease complex with broad specificity involved in protein degradation. The polypeptide is Proteasome subunit beta 2 (Salinispora tropica (strain ATCC BAA-916 / DSM 44818 / JCM 13857 / NBRC 105044 / CNB-440)).